A 367-amino-acid polypeptide reads, in one-letter code: tRNA-specific 2-thiouridylase MnmA (367 aa).

ATP contacts are provided by residues 12–19 and Met-38; that span reads GMSGGVDS. Residues 98 to 100 are interaction with target base in tRNA; that stretch reads NPD. The Nucleophile role is filled by Cys-103. Cys-103 and Cys-200 are oxidised to a cystine. Gly-128 is an ATP binding site. Residues 150–152 form an interaction with tRNA region; sequence KDQ. Catalysis depends on Cys-200, which acts as the Cysteine persulfide intermediate. Residues 312–313 form an interaction with tRNA region; sequence RY.

Belongs to the MnmA/TRMU family. Interacts with TusE.

It localises to the cytoplasm. The catalysed reaction is S-sulfanyl-L-cysteinyl-[protein] + uridine(34) in tRNA + AH2 + ATP = 2-thiouridine(34) in tRNA + L-cysteinyl-[protein] + A + AMP + diphosphate + H(+). Catalyzes the 2-thiolation of uridine at the wobble position (U34) of tRNA(Lys), tRNA(Glu) and tRNA(Gln), leading to the formation of s(2)U34, the first step of tRNA-mnm(5)s(2)U34 synthesis. Sulfur is provided by IscS, via a sulfur-relay system. Binds ATP and its substrate tRNAs. This Photorhabdus laumondii subsp. laumondii (strain DSM 15139 / CIP 105565 / TT01) (Photorhabdus luminescens subsp. laumondii) protein is tRNA-specific 2-thiouridylase MnmA.